Here is a 513-residue protein sequence, read N- to C-terminus: Solute carrier family 2, facilitated glucose transporter member 7 (513 aa).

Over 1–21 (MEDKEIGTPLPLPHSEARLQP) the chain is Cytoplasmic. The helical transmembrane segment at 22–42 (TLVLTTLSAAFGSVFQYGYNI) threads the bilayer. Over 43–78 (AVINTPHKVFKSFYNDTHFERHGTFMDESTLLLLWS) the chain is Extracellular. Asn-57 carries an N-linked (GlcNAc...) asparagine glycan. A helical transmembrane segment spans residues 79-99 (CTVSMFPLGGLLGSLVVGLMV). The Cytoplasmic portion of the chain corresponds to 100 to 107 (NKWGRKGT). The helical transmembrane segment at 108–128 (LLINNVFAITSAVLMGVSKVA) threads the bilayer. Topologically, residues 129-138 (RAFELIILSR) are extracellular. A helical transmembrane segment spans residues 139 to 159 (VLVGICAGIAYSTLPMYLGEL). The Cytoplasmic portion of the chain corresponds to 160–172 (APQNLRGALGTMT). The chain crosses the membrane as a helical span at residues 173 to 193 (EVFVIIGVLLAQIFSLQAILG). Over 194-198 (NATGW) the chain is Extracellular. The helical transmembrane segment at 199-219 (PILLALTGVPAVIQLLSLPFF) threads the bilayer. At 220-282 (PESPRYTLIE…LNLFTFRPLR (63 aa)) the chain is on the cytoplasmic side. The chain crosses the membrane as a helical span at residues 283 to 303 (WQLISIVVLMAGQQLSGINAV). D-glucose is bound by residues 295–296 (QQ) and Asn-301. Over 304 to 322 (NYYADVIYTSAGVDPTQSQ) the chain is Extracellular. Residues 323–343 (YVTLGSGVINLVMTLVSAVII) form a helical membrane-spanning segment. Asn-332 is a D-glucose binding site. Residues 344 to 351 (ERLGRRIL) are Cytoplasmic-facing. A helical membrane pass occupies residues 352–372 (LLSGYAICCSACLVLTVALLL). The Extracellular segment spans residues 373–380 (QSTAPELS). The helical transmembrane segment at 381 to 401 (YLSIVCVFSYIVGHSIGPSPV) threads the bilayer. The Cytoplasmic portion of the chain corresponds to 402–416 (PSVVRTEIVLQSSRT). Residues 417 to 437 (AAFTVDGAVHWLTNFIVGLTF) traverse the membrane as a helical segment. At 438-446 (PSIQVAIGA) the chain is on the extracellular side. A helical transmembrane segment spans residues 447 to 467 (YSFLVFAGVCILTAAYIYVVI). Residues 468-513 (PETKGRTFVEINCAFAKRNGVEFPEEKEVATAKPHTPSLPTKETAF) lie on the Cytoplasmic side of the membrane. The interval 494–513 (KEVATAKPHTPSLPTKETAF) is disordered.

Belongs to the major facilitator superfamily. Sugar transporter (TC 2.A.1.1) family. Glucose transporter subfamily.

It is found in the cell membrane. It localises to the apical cell membrane. It catalyses the reaction D-glucose(out) = D-glucose(in). It carries out the reaction D-fructose(out) = D-fructose(in). Its function is as follows. Probable sugar transporter. Even if its physiological substrate is subject to discussion, it is able to transport glucose and fructose. Does not transport galactose, 2-deoxy-d-glucose and xylose. The chain is Solute carrier family 2, facilitated glucose transporter member 7 from Mus musculus (Mouse).